A 339-amino-acid chain; its full sequence is UDP-N-acetylglucosamine/UDP-N-acetylgalactosamine transporter nstp-4 (339 aa).

The next 8 membrane-spanning stretches (helical) occupy residues 44 to 64 (LSST…FFVI), 94 to 114 (LKVA…FFAL), 148 to 168 (YNWM…YPSG), 186 to 206 (ILGL…GVYF), 224 to 244 (LAFF…WQAI), 255 to 275 (GVIW…ALVV), 281 to 301 (ILKG…SWLV), and 305 to 325 (LTIT…TFLY).

The protein belongs to the nucleotide-sugar transporter family. SLC35A subfamily. As to expression, widely expressed, including in pharynx and pharyngeal gland cells, seam cells, spermatheca, stomatointestinal muscle, vulva, and body wall muscle.

The protein localises to the golgi apparatus membrane. Its function is as follows. Uridine diphosphate-N-acetylglucosamine (UDP-GlcNAc) transporter in the Golgi apparatus. UDP-N-acetylgalactosamine (UDP-GalNAc) transporter in the Golgi apparatus. Apparently transports UDP-GlcNAc and UDP-GalNAc simultaneously, and independently, by an unknown mechanism. Functions redundantly with nucleotide sugar transporter srf-3. May be involved in gonadal development. This Caenorhabditis elegans protein is UDP-N-acetylglucosamine/UDP-N-acetylgalactosamine transporter nstp-4.